A 1025-amino-acid chain; its full sequence is Multidrug resistance protein MdtC (1025 aa).

12 helical membrane-spanning segments follow: residues 3 to 23, 333 to 353, 360 to 380, 387 to 407, 431 to 451, 463 to 483, 528 to 548, 853 to 873, 875 to 895, 897 to 917, 953 to 973, and 984 to 1004; these read FFAL…AITL, EVEQ…FLFL, IIPA…MYLC, LSLM…IVVL, VGFT…PLLL, FAVT…TLTP, LVGV…ISIP, VILI…LYES, VHPL…LLAL, LFNA…IGIV, PIMM…LSGG, and ITIV…TPVV.

The protein belongs to the resistance-nodulation-cell division (RND) (TC 2.A.6) family. MdtC subfamily. In terms of assembly, part of a tripartite efflux system composed of MdtA, MdtB and MdtC. MdtC forms a heteromultimer with MdtB.

The protein localises to the cell inner membrane. In terms of biological role, the MdtABC tripartite complex confers resistance against novobiocin and deoxycholate. This chain is Multidrug resistance protein MdtC, found in Escherichia fergusonii (strain ATCC 35469 / DSM 13698 / CCUG 18766 / IAM 14443 / JCM 21226 / LMG 7866 / NBRC 102419 / NCTC 12128 / CDC 0568-73).